The primary structure comprises 1048 residues: 3-hydroxy-3-methylglutaryl-coenzyme A reductase (1048 aa).

Residues methionine 1–proline 32 are Cytoplasmic-facing. The helical transmembrane segment at isoleucine 33–glycine 53 threads the bilayer. Over threonine 54–threonine 220 the chain is Lumenal. A helical membrane pass occupies residues valine 221–phenylalanine 241. The SSD domain occupies aspartate 222–valine 403. Topologically, residues arginine 242 to arginine 250 are cytoplasmic. A helical transmembrane segment spans residues phenylalanine 251–isoleucine 271. Over threonine 272 to aspartate 276 the chain is Lumenal. Residues valine 277–phenylalanine 297 form a helical membrane-spanning segment. Residues glutamate 298–glutamate 348 lie on the Cytoplasmic side of the membrane. A helical membrane pass occupies residues glycine 349–leucine 369. Topologically, residues arginine 370–histidine 377 are lumenal. An N-linked (GlcNAc...) asparagine glycan is attached at asparagine 372. The chain crosses the membrane as a helical span at residues phenylalanine 378–alanine 398. Topologically, residues threonine 399–tryptophan 439 are cytoplasmic. A helical membrane pass occupies residues tryptophan 440–phenylalanine 460. Over tyrosine 461–arginine 542 the chain is Lumenal. Residues asparagine 470 and asparagine 520 are each glycosylated (N-linked (GlcNAc...) asparagine). The chain crosses the membrane as a helical span at residues leucine 543–alanine 563. Over arginine 564–lysine 1048 the chain is Cytoplasmic. The Charge relay system role is filled by glutamate 729. Serine 735–lysine 741 provides a ligand contact to CoA. Residues serine 796–phenylalanine 798 and aspartate 823–serine 831 contribute to the NADP(+) site. The active-site Charge relay system is lysine 863. Residue valine 892–lysine 894 coordinates CoA. Residue aspartate 939 is the Charge relay system of the active site. Residue alanine 1034–histidine 1035 coordinates CoA. Histidine 1035 (proton donor) is an active-site residue. Residue asparagine 1039–arginine 1040 participates in NADP(+) binding.

Belongs to the HMG-CoA reductase family.

The protein localises to the endoplasmic reticulum membrane. The enzyme catalyses (R)-mevalonate + 2 NADP(+) + CoA = (3S)-3-hydroxy-3-methylglutaryl-CoA + 2 NADPH + 2 H(+). It participates in metabolic intermediate biosynthesis; (R)-mevalonate biosynthesis; (R)-mevalonate from acetyl-CoA: step 3/3. Functionally, HMG-CoA reductase; part of the first module of ergosterol biosynthesis pathway that includes the early steps of the pathway, conserved across all eukaryotes, and which results in the formation of mevalonate from acetyl-coenzyme A (acetyl-CoA). In this module, the cytosolic acetyl-CoA acetyltransferase catalyzes the formation of acetoacetyl-CoA. The hydroxymethylglutaryl-CoA synthase then condenses acetyl-CoA with acetoacetyl-CoA to form HMG-CoA. The rate-limiting step of the early module is the reduction to mevalonate by the 3-hydroxy-3-methylglutaryl-coenzyme A (HMG-CoA) reductase. The sequence is that of 3-hydroxy-3-methylglutaryl-coenzyme A reductase from Aspergillus terreus (strain NIH 2624 / FGSC A1156).